Here is a 660-residue protein sequence, read N- to C-terminus: Bifunctional polymyxin resistance protein ArnA (660 aa).

Residues 1 to 304 are formyltransferase ArnAFT; the sequence is MKTVVFAYHD…TLGLVQGSRL (304 aa). Residue 86–88 coordinates (6R)-10-formyltetrahydrofolate; the sequence is HLI. The active-site Proton donor; for formyltransferase activity is the His104. (6R)-10-formyltetrahydrofolate is bound by residues Arg114 and 136–140; that span reads VKRAD. The segment at 314-660 is dehydrogenase ArnADH; the sequence is RRTRVLILGV…RTVDLTDKPL (347 aa). NAD(+) is bound by residues Asp347 and 368–369; that span reads DI. Residues Ala393, Tyr398, and 432-433 contribute to the UDP-alpha-D-glucuronate site; that span reads TS. The Proton acceptor; for decarboxylase activity role is filled by Glu434. Residues Arg460, Asn492, 526 to 535, and Tyr613 each bind UDP-alpha-D-glucuronate; that span reads KLIDGGKQKR. Residue Arg619 is the Proton donor; for decarboxylase activity of the active site.

In the N-terminal section; belongs to the Fmt family. UDP-L-Ara4N formyltransferase subfamily. The protein in the C-terminal section; belongs to the NAD(P)-dependent epimerase/dehydratase family. UDP-glucuronic acid decarboxylase subfamily. In terms of assembly, homohexamer, formed by a dimer of trimers.

The enzyme catalyses UDP-alpha-D-glucuronate + NAD(+) = UDP-beta-L-threo-pentopyranos-4-ulose + CO2 + NADH. It catalyses the reaction UDP-4-amino-4-deoxy-beta-L-arabinose + (6R)-10-formyltetrahydrofolate = UDP-4-deoxy-4-formamido-beta-L-arabinose + (6S)-5,6,7,8-tetrahydrofolate + H(+). It functions in the pathway nucleotide-sugar biosynthesis; UDP-4-deoxy-4-formamido-beta-L-arabinose biosynthesis; UDP-4-deoxy-4-formamido-beta-L-arabinose from UDP-alpha-D-glucuronate: step 1/3. It participates in nucleotide-sugar biosynthesis; UDP-4-deoxy-4-formamido-beta-L-arabinose biosynthesis; UDP-4-deoxy-4-formamido-beta-L-arabinose from UDP-alpha-D-glucuronate: step 3/3. The protein operates within bacterial outer membrane biogenesis; lipopolysaccharide biosynthesis. Its function is as follows. Bifunctional enzyme that catalyzes the oxidative decarboxylation of UDP-glucuronic acid (UDP-GlcUA) to UDP-4-keto-arabinose (UDP-Ara4O) and the addition of a formyl group to UDP-4-amino-4-deoxy-L-arabinose (UDP-L-Ara4N) to form UDP-L-4-formamido-arabinose (UDP-L-Ara4FN). The modified arabinose is attached to lipid A and is required for resistance to polymyxin and cationic antimicrobial peptides. The sequence is that of Bifunctional polymyxin resistance protein ArnA from Escherichia coli O6:K15:H31 (strain 536 / UPEC).